The chain runs to 386 residues: Agamous-like MADS-box protein AGL30 (386 aa).

In terms of domain architecture, MADS-box spans 1–53 (MGRVKLKIKKLENTNGRQSTFAKRKNGILKKANELSILCDIDIVLLMFSPTGK). The interval 341–360 (PDSSAYNDNTNQTRFGSSSS) is disordered. The segment covering 344–356 (SAYNDNTNQTRFG) has biased composition (polar residues).

As to quaternary structure, forms heterodimers with AGL66 and AGL104. As to expression, expressed in pollen.

The protein localises to the nucleus. Functionally, probable transcription factor that forms heterodimers with the MADS-box proteins AGL66 and AGL104 and is involved in the regulation of pollen maturation at the late stages of pollen development and pollen tube growth. The polypeptide is Agamous-like MADS-box protein AGL30 (Arabidopsis thaliana (Mouse-ear cress)).